Reading from the N-terminus, the 284-residue chain is Bifunctional protein FolD (284 aa).

Residues 165–167 (GRS), serine 190, and isoleucine 231 contribute to the NADP(+) site.

It belongs to the tetrahydrofolate dehydrogenase/cyclohydrolase family. As to quaternary structure, homodimer.

It carries out the reaction (6R)-5,10-methylene-5,6,7,8-tetrahydrofolate + NADP(+) = (6R)-5,10-methenyltetrahydrofolate + NADPH. It catalyses the reaction (6R)-5,10-methenyltetrahydrofolate + H2O = (6R)-10-formyltetrahydrofolate + H(+). The protein operates within one-carbon metabolism; tetrahydrofolate interconversion. In terms of biological role, catalyzes the oxidation of 5,10-methylenetetrahydrofolate to 5,10-methenyltetrahydrofolate and then the hydrolysis of 5,10-methenyltetrahydrofolate to 10-formyltetrahydrofolate. The chain is Bifunctional protein FolD from Streptococcus thermophilus (strain ATCC BAA-491 / LMD-9).